Reading from the N-terminus, the 627-residue chain is Transducer protein MpcT (627 aa).

2 consecutive transmembrane segments (helical) span residues 28–48 (MLTAVGLQFLAAGGMAFLTVF) and 55–75 (LIGVGGMLALSVVAFYNTYLI). 2 consecutive HAMP domains span residues 78–132 (ADFV…VASR) and 192–247 (EQLR…DTIS). A Methyl-accepting transducer domain is found at 266–502 (RVDAVADRSA…DVVGMVEEVA (237 aa)). Glutamate methyl ester (Glu) occurs at positions 310, 416, and 507. Disordered stretches follow at residues 505–527 (SEETAAESDTVADNAAEQTDATD) and 557–627 (GTAD…ADSQ). Residues 580–590 (AAAVVDQPQPA) are compositionally biased toward low complexity.

It belongs to the methyl-accepting chemotaxis (MCP) protein family. As to quaternary structure, interacts with CheA, CheY and CheW1. In terms of processing, methylated by CheR.

The protein localises to the cell membrane. In terms of biological role, mediates bacteriorhodopsin- and halorhodopsin-dependent photoresponses by detecting membrane potential changes. Probably transduces the signal to the histidine kinase CheA. This is Transducer protein MpcT (mpcT) from Halobacterium salinarum (strain ATCC 29341 / DSM 671 / R1).